A 452-amino-acid chain; its full sequence is Scaffold protein ILK (452 aa).

5 ANK repeats span residues 2–30, 31–63, 64–96, 97–129, and 130–174; these read DDIF…LNQG, DDHG…INVM, NRGD…INAV, NEHG…VSIA, and NKYS…GTTR. The Protein kinase domain occupies 193 to 446; that stretch reads LSLSQKLNEN…PKFDMIVPIL (254 aa). ATP contacts are provided by N200, N202, S204, H270, M272, and N279. D339 provides a ligand contact to Mg(2+). K341 serves as a coordination point for ATP. Residues 363–371 carry the Nuclear localization signal motif; it reads KKPEEINRR.

Belongs to the protein kinase superfamily. TKL Ser/Thr protein kinase family. Interacts with PXN/PAXILLIN (via LD motif 4).

Its subcellular location is the cell junction. It localises to the focal adhesion. The protein localises to the cell membrane. The protein resides in the cell projection. It is found in the lamellipodium. Its subcellular location is the cytoplasm. It localises to the myofibril. The protein localises to the sarcomere. The protein resides in the nucleus. It is found in the cytoskeleton. Its subcellular location is the microtubule organizing center. It localises to the centrosome. The protein localises to the cell cortex. Scaffold protein which mediates protein-protein interactions during a range of cellular events including focal adhesion assembly, cell adhesion and cell migration. This chain is Scaffold protein ILK, found in Gallus gallus (Chicken).